A 136-amino-acid polypeptide reads, in one-letter code: Putative LysR family substrate binding domain-containing protein YagP (136 aa).

This sequence belongs to the LysR transcriptional regulatory family.

The chain is Putative LysR family substrate binding domain-containing protein YagP (yagP) from Escherichia coli (strain K12).